The chain runs to 499 residues: Xylulose kinase (499 aa).

81 to 82 (MH) contributes to the substrate binding site. The Proton acceptor role is filled by Asp239.

It belongs to the FGGY kinase family.

It carries out the reaction D-xylulose + ATP = D-xylulose 5-phosphate + ADP + H(+). In terms of biological role, catalyzes the phosphorylation of D-xylulose to D-xylulose 5-phosphate. In Bacillus subtilis (strain 168), this protein is Xylulose kinase.